The primary structure comprises 318 residues: Ubiquitin-like domain-containing CTD phosphatase 1 (318 aa).

The Ubiquitin-like domain maps to 3 to 81 (LSLIIKWGGQ…IMMMGTREES (79 aa)). The region spanning 133 to 294 (PREGKKLLVL…VKLSQYLKEI (162 aa)) is the FCP1 homology domain. Mg(2+) contacts are provided by Asp143, Asp145, and Asp253.

Requires Mg(2+) as cofactor.

The protein localises to the nucleus. The enzyme catalyses O-phospho-L-seryl-[protein] + H2O = L-seryl-[protein] + phosphate. The catalysed reaction is O-phospho-L-threonyl-[protein] + H2O = L-threonyl-[protein] + phosphate. Its function is as follows. Dephosphorylates 26S nuclear proteasomes, thereby decreasing their proteolytic activity. Recruited to the 19S regulatory particle of the 26S proteasome where it dephosphorylates 19S component psmc2 which impairs psmc2 ATPase activity and disrupts 26S proteasome assembly. Has also been reported to stimulate the proteolytic activity of the 26S proteasome. The chain is Ubiquitin-like domain-containing CTD phosphatase 1 (ublcp1) from Xenopus laevis (African clawed frog).